A 243-amino-acid polypeptide reads, in one-letter code: Ubiquinone biosynthesis O-methyltransferase (243 aa).

Residues Arg44, Gly64, Asp85, and Met129 each coordinate S-adenosyl-L-methionine.

Belongs to the methyltransferase superfamily. UbiG/COQ3 family.

It catalyses the reaction a 3-demethylubiquinol + S-adenosyl-L-methionine = a ubiquinol + S-adenosyl-L-homocysteine + H(+). It carries out the reaction a 3-(all-trans-polyprenyl)benzene-1,2-diol + S-adenosyl-L-methionine = a 2-methoxy-6-(all-trans-polyprenyl)phenol + S-adenosyl-L-homocysteine + H(+). The protein operates within cofactor biosynthesis; ubiquinone biosynthesis. O-methyltransferase that catalyzes the 2 O-methylation steps in the ubiquinone biosynthetic pathway. The protein is Ubiquinone biosynthesis O-methyltransferase of Erwinia tasmaniensis (strain DSM 17950 / CFBP 7177 / CIP 109463 / NCPPB 4357 / Et1/99).